Reading from the N-terminus, the 229-residue chain is MELLLLSNSTLPGKAWLEHALPLIANQLNGRRSAVFIPFAGVTQTWDEYTDKTAEVLAPLGVNVTGIHRVADPLAAIEKAEIIIVGGGNTFQLLKESRERGLLAPVADRVKRGALYIGWSAGANLACPTIRTTNDMPIVDPNGFDALDLFPLQINPHFTNALPEGHKGETREQRIRELLVVAPELAVIGLPEGNWIQVSNGQAVLGGPNTTWVFKAGEEAVALEAGHRF.

Active-site charge relay system residues include Ser-120, Asp-135, and His-157.

The protein belongs to the peptidase S51 family.

It localises to the cytoplasm. The enzyme catalyses Dipeptidase E catalyzes the hydrolysis of dipeptides Asp-|-Xaa. It does not act on peptides with N-terminal Glu, Asn or Gln, nor does it cleave isoaspartyl peptides.. In terms of biological role, hydrolyzes dipeptides containing N-terminal aspartate residues. May play a role in allowing the cell to use peptide aspartate to spare carbon otherwise required for the synthesis of the aspartate family of amino acids. In Salmonella newport (strain SL254), this protein is Peptidase E.